Here is a 193-residue protein sequence, read N- to C-terminus: Probable DNA-directed RNA polymerase subunit delta (193 aa).

Positions 14 to 81 constitute an HTH HARE-type domain; the sequence is LALVEIATAI…GNNEWGLRAW (68 aa). Composition is skewed to acidic residues over residues 119-174 and 182-193; these read DDDV…DDNL and DLDDLSDGDIEK. Positions 119 to 193 are disordered; the sequence is DDDVIDYNDD…DDLSDGDIEK (75 aa).

It belongs to the RpoE family. In terms of assembly, RNAP is composed of a core of 2 alpha, a beta and a beta' subunits. The core is associated with a delta subunit and one of several sigma factors.

Participates in both the initiation and recycling phases of transcription. In the presence of the delta subunit, RNAP displays an increased specificity of transcription, a decreased affinity for nucleic acids, and an increased efficiency of RNA synthesis because of enhanced recycling. In Leuconostoc citreum (strain KM20), this protein is Probable DNA-directed RNA polymerase subunit delta.